A 918-amino-acid polypeptide reads, in one-letter code: Eukaryotic translation initiation factor 3 subunit C (918 aa).

The segment at 1–174 is disordered; the sequence is MSRFFKGGSS…EEEGRRVVKS (174 aa). Ser-10, Ser-12, Ser-16, Ser-19, and Ser-20 each carry phosphoserine. Composition is skewed to acidic residues over residues 36 to 47, 54 to 67, and 79 to 128; these read SSSEEESSEEES, ESSE…ESEV, and EDSE…ESDE. Phosphothreonine is present on Thr-667. Residues 681–856 enclose the PCI domain; it reads FHMHINLELL…GAIIFERVEI (176 aa). A disordered region spans residues 879 to 918; the sequence is KLYEQKTQHTNPQENRRRDKGGSVKRRNERTENRNRSDMN. Positions 907–918 are enriched in basic and acidic residues; that stretch reads ERTENRNRSDMN.

Belongs to the eIF-3 subunit C family. As to quaternary structure, component of the eukaryotic translation initiation factor 3 (eIF-3) complex. The eIF-3 complex appears to include tif32/eif3a, SPAC25G10.08/eif3b, tif33/eif3c, SPBC4C3.07/eif3f, tif35/eif3g and sum1/eif3i. This set of common subunits may also associate exclusively with either moe1/eif3d and int6/eif3e, or with SPAC821.05/eif3h and SPAC1751.03/eif3m. The eIF-3 complex may also include SPAC3A12.13c/eif3j.

It is found in the cytoplasm. In terms of biological role, component of the eukaryotic translation initiation factor 3 (eIF-3) complex, which is involved in protein synthesis of a specialized repertoire of mRNAs and, together with other initiation factors, stimulates binding of mRNA and methionyl-tRNAi to the 40S ribosome. The eIF-3 complex specifically targets and initiates translation of a subset of mRNAs involved in cell proliferation. In Schizosaccharomyces pombe (strain 972 / ATCC 24843) (Fission yeast), this protein is Eukaryotic translation initiation factor 3 subunit C (nip1).